Here is a 102-residue protein sequence, read N- to C-terminus: uncharacterized protein (102 aa).

2 consecutive transmembrane segments (helical) span residues 33–55 and 57–79; these read VLELLTIISGLVVTLVLVVLVVL and VVGVVVLVVLLVVVVLLCDVVVA.

Its subcellular location is the membrane. This is an uncharacterized protein from Saccharomyces cerevisiae (strain ATCC 204508 / S288c) (Baker's yeast).